The following is a 794-amino-acid chain: Potassium transporter 2 (794 aa).

The Cytoplasmic segment spans residues 1 to 21 (MDLNLGKCCGSRSSKKESWRS). A helical transmembrane segment spans residues 22 to 42 (VLLLAYQSLGVVYGDLSISPL). Topologically, residues 43–64 (YVFKSTFAEDIQHSETNEEIYG) are extracellular. Residues 65-85 (VMSFVFWTLTLVPLLKYVFIV) form a helical membrane-spanning segment. Residues 86-153 (LRADDNGEGG…EKHKWLHTAL (68 aa)) lie on the Cytoplasmic side of the membrane. Residues 154–174 (LLLVLLGTCMVIGDGLLTPAI) traverse the membrane as a helical segment. The Extracellular segment spans residues 175 to 193 (SVFSAVSGLELNMSKEHHQ). The chain crosses the membrane as a helical span at residues 194–214 (YAVIPITCFILVCLFSLQHFG). The Cytoplasmic segment spans residues 215 to 217 (THR). The chain crosses the membrane as a helical span at residues 218 to 238 (VGFVFAPIVLTWLLCISGIGL). At 239–265 (YNIIQWNPHIYKALSPTYMFMFLRKTR) the chain is on the extracellular side. The chain crosses the membrane as a helical span at residues 266-286 (VSGWMSLGGILLCITGAEAMF). Residues 287-294 (ADLGHFNY) lie on the Cytoplasmic side of the membrane. A helical transmembrane segment spans residues 295-315 (AAIQIAFTFLVYPALILAYMG). The Extracellular portion of the chain corresponds to 316-339 (QAAYLSRHHHSAHAIGFYVSVPKC). A helical membrane pass occupies residues 340–360 (LHWPVLAVAILASVVGSQAII). Topologically, residues 361–391 (SGTFSIINQSQSLGCFPRVKVIHTSDKMHGQ) are cytoplasmic. The helical transmembrane segment at 392–412 (IYIPEINWMLMILCIAVTIGF) threads the bilayer. The Extracellular portion of the chain corresponds to 413-417 (RDVKH). Transmembrane regions (helical) follow at residues 418–438 (LGNA…CLTS) and 439–459 (LVIV…LLFF). Topologically, residues 460–476 (GSIELLYFSASLTKFRE) are extracellular. The helical transmembrane segment at 477–497 (GAWLPILLSLIFMIIMFVWHY) threads the bilayer. Residues 498 to 794 (TTIKKYEFDL…LLEVGMVYVV (297 aa)) are Cytoplasmic-facing.

This sequence belongs to the HAK/KUP transporter (TC 2.A.72.3) family. Slightly detected in roots, stems, leaves and flowers of mature plants and in potassium-starved plants.

The protein localises to the cell membrane. Low-affinity potassium transporter. Could mediate the potassium-dependent cell expansion in growing tissues. The chain is Potassium transporter 2 (POT2) from Arabidopsis thaliana (Mouse-ear cress).